A 572-amino-acid chain; its full sequence is Vacuolar protein sorting-associated protein vps901 (572 aa).

2 stretches are compositionally biased toward basic and acidic residues: residues 1 to 31 (MDYP…EKPL) and 39 to 53 (DEQR…KNHD). The tract at residues 1 to 108 (MDYPSFHEDP…HENNPGQQEI (108 aa)) is disordered. Over residues 69-80 (QYEQTDSSSDQE) the composition is skewed to polar residues. Residues 82-98 (MNEKQSLDKENRNDNIP) are compositionally biased toward basic and acidic residues. Positions 219–357 (VEEDRVLSEK…IETLDCSSLT (139 aa)) constitute a VPS9 domain. Residues 430 to 502 (QIDTPESKEY…IVHEEQPVDD (73 aa)) are disordered. Residues 445–457 (PRGSSHSGSFTTD) show a composition bias toward polar residues. The CUE domain occupies 529–571 (REKAEAITALRAMFPAFDSEVIEVVLNAQQGRLSSSIDSLLEM).

Its function is as follows. Required for vacuolar protein sorting; may be required for the consumption of transport vesicles containing vacuolar protein precursors. Required for vacuolar fusion. The polypeptide is Vacuolar protein sorting-associated protein vps901 (vps901) (Schizosaccharomyces pombe (strain 972 / ATCC 24843) (Fission yeast)).